A 287-amino-acid polypeptide reads, in one-letter code: MASGREIKSKIKSVQNTRKVTRALEMVSASKIRKAQEQMKISRPYAQAMKQMIGHLAQANTDYLHPFLIAHKQVKRIGYIVISSDRGLAGGLNNNLFRKILGEMRQWQDKGVEVDIVTIGQKASVFFRRIKVNILGSVTHLGDTPRLEQLIGVIKVMLDAYTEEKLDRVYLVYNRFINTMVQKASFDQLLPLLAAKDKVAHHDWDYLYEPDAATVLEHVMTRYIESLVYQAMLENIASEHAARMVAMKAASDNANKLIGTLQLVYNKARQAAITQEISEIVGGAAAV.

It belongs to the ATPase gamma chain family. F-type ATPases have 2 components, CF(1) - the catalytic core - and CF(0) - the membrane proton channel. CF(1) has five subunits: alpha(3), beta(3), gamma(1), delta(1), epsilon(1). CF(0) has three main subunits: a, b and c.

Its subcellular location is the cell inner membrane. Functionally, produces ATP from ADP in the presence of a proton gradient across the membrane. The gamma chain is believed to be important in regulating ATPase activity and the flow of protons through the CF(0) complex. This is ATP synthase gamma chain from Xylella fastidiosa (strain M12).